The primary structure comprises 497 residues: Aluminum-activated malate transporter 10 (497 aa).

6 helical membrane passes run 66-86 (KVVHCLKVGLALSLVSIFYYM), 88-108 (PLYDGVGGNAMWAIMTVVVVF), 123-143 (VVATILAGSLGIAVHWVATQS), 148-168 (VFVIGCSVFLFAFAATYSRFV), 173-193 (ARFDYGAMIFILTFSLVSVGG), and 210-230 (IAIGTSICIIITVFFCPIWAG). Disordered regions lie at residues 413 to 437 (PIETNKPEEVPSEEENKVDSEERTT) and 476 to 497 (DFEQDSKKKTGDNNTKQPPLSS). A compositionally biased stretch (basic and acidic residues) spans 417–436 (NKPEEVPSEEENKVDSEERT). Residues 487 to 497 (DNNTKQPPLSS) are compositionally biased toward polar residues.

Belongs to the aromatic acid exporter (TC 2.A.85) family.

It is found in the membrane. Its function is as follows. Malate transporter. This Arabidopsis thaliana (Mouse-ear cress) protein is Aluminum-activated malate transporter 10 (ALMT10).